A 509-amino-acid chain; its full sequence is ATP synthase subunit alpha (509 aa).

An ATP-binding site is contributed by 169–176 (GDRQTGKT).

This sequence belongs to the ATPase alpha/beta chains family. As to quaternary structure, F-type ATPases have 2 components, CF(1) - the catalytic core - and CF(0) - the membrane proton channel. CF(1) has five subunits: alpha(3), beta(3), gamma(1), delta(1), epsilon(1). CF(0) has three main subunits: a(1), b(2) and c(9-12). The alpha and beta chains form an alternating ring which encloses part of the gamma chain. CF(1) is attached to CF(0) by a central stalk formed by the gamma and epsilon chains, while a peripheral stalk is formed by the delta and b chains.

It localises to the cell inner membrane. The enzyme catalyses ATP + H2O + 4 H(+)(in) = ADP + phosphate + 5 H(+)(out). Functionally, produces ATP from ADP in the presence of a proton gradient across the membrane. The alpha chain is a regulatory subunit. This is ATP synthase subunit alpha from Methylobacterium nodulans (strain LMG 21967 / CNCM I-2342 / ORS 2060).